Consider the following 754-residue polypeptide: Aspartyl/asparaginyl beta-hydroxylase (754 aa).

Residues 1–48 (MAPRKNAKGGGGNSSSSSSGSPTGCTSGGSSSPGARRETKQGGLKNGR) form a disordered region. Topologically, residues 1 to 56 (MAPRKNAKGGGGNSSSSSSGSPTGCTSGGSSSPGARRETKQGGLKNGRKGGLSGSS) are cytoplasmic. The segment covering 14 to 34 (SSSSSSGSPTGCTSGGSSSPG) has biased composition (low complexity). Ser15 carries the post-translational modification Phosphoserine. Residues 57–77 (FFTWFMVIALLGVWTSVAVVW) form a helical; Signal-anchor for type II membrane protein membrane-spanning segment. Over 78–754 (FDLVDYEEVL…PHQRRSLPAI (677 aa)) the chain is Lumenal. Asn96 carries an N-linked (GlcNAc...) asparagine glycan. Asp109, Asp111, Asp113, Asp115, and Asp120 together coordinate Ca(2+). Disordered stretches follow at residues 176-197 (VYSE…ELQP) and 247-326 (EQEN…KKKK). Basic and acidic residues-rich tracts occupy residues 261-284 (DAER…DHAV) and 309-318 (TNKKADEPGK). TPR repeat units follow at residues 337–370 (IKAE…YPQS), 378–411 (AQCE…PDAP), 450–483 (TALK…TPND), 485–517 (FAKV…GDPG), and 521–553 (GRFY…GHFA). Asn466 carries N-linked (GlcNAc...) asparagine glycosylation. Trp621 provides a ligand contact to 2-oxoglutarate. A disulfide bridge links Cys637 with Cys644. Ser664 is a 2-oxoglutarate binding site. Position 675 (His675) interacts with Fe cation. 684-686 (RMH) provides a ligand contact to 2-oxoglutarate. N-linked (GlcNAc...) asparagine glycosylation is present at Asn702. Residue His721 coordinates Fe cation. Arg731 lines the 2-oxoglutarate pocket.

The protein belongs to the aspartyl/asparaginyl beta-hydroxylase family. As to quaternary structure, monomer. The cofactor is Fe cation. Might be processed to the 56 kDa (AA 289-754) or 52 kDa (AA 311-754) forms in the lumen of the endoplasmic reticulum.

It localises to the endoplasmic reticulum membrane. It carries out the reaction L-aspartyl-[protein] + 2-oxoglutarate + O2 = 3-hydroxy-L-aspartyl-[protein] + succinate + CO2. Its function is as follows. Specifically hydroxylates an Asp or Asn residue in certain epidermal growth factor-like (EGF) domains of a number of proteins. The polypeptide is Aspartyl/asparaginyl beta-hydroxylase (ASPH) (Bos taurus (Bovine)).